A 316-amino-acid chain; its full sequence is Acetyl-coenzyme A carboxylase carboxyl transferase subunit alpha (316 aa).

Residues 36 to 290 (LLEERLARLR…KEALLKALEE (255 aa)) enclose the CoA carboxyltransferase C-terminal domain.

Belongs to the AccA family. As to quaternary structure, acetyl-CoA carboxylase is a heterohexamer composed of biotin carboxyl carrier protein (AccB), biotin carboxylase (AccC) and two subunits each of ACCase subunit alpha (AccA) and ACCase subunit beta (AccD).

It localises to the cytoplasm. The enzyme catalyses N(6)-carboxybiotinyl-L-lysyl-[protein] + acetyl-CoA = N(6)-biotinyl-L-lysyl-[protein] + malonyl-CoA. It functions in the pathway lipid metabolism; malonyl-CoA biosynthesis; malonyl-CoA from acetyl-CoA: step 1/1. In terms of biological role, component of the acetyl coenzyme A carboxylase (ACC) complex. First, biotin carboxylase catalyzes the carboxylation of biotin on its carrier protein (BCCP) and then the CO(2) group is transferred by the carboxyltransferase to acetyl-CoA to form malonyl-CoA. The sequence is that of Acetyl-coenzyme A carboxylase carboxyl transferase subunit alpha from Thermus thermophilus (strain ATCC 27634 / DSM 579 / HB8).